Here is a 625-residue protein sequence, read N- to C-terminus: Coagulation factor XI (625 aa).

The signal sequence occupies residues 1–18 (MIFLYQVVHFILFTSVSG). 4 consecutive Apple domains span residues 20 to 103 (CVTQ…FKQC), 110 to 193 (CNKD…LKSC), 200 to 283 (CIRD…LQSC), and 291 to 374 (CHSS…LRLC). Cystine bridges form between cysteine 20–cysteine 103, cysteine 46–cysteine 76, cysteine 50–cysteine 56, cysteine 110–cysteine 193, cysteine 136–cysteine 165, cysteine 140–cysteine 146, cysteine 200–cysteine 283, cysteine 226–cysteine 255, cysteine 230–cysteine 236, cysteine 291–cysteine 374, cysteine 317–cysteine 346, cysteine 321–cysteine 327, cysteine 380–cysteine 500, cysteine 416–cysteine 432, cysteine 514–cysteine 581, cysteine 545–cysteine 560, and cysteine 571–cysteine 599. N-linked (GlcNAc...) (complex) asparagine glycosylation is found at asparagine 90 and asparagine 126. N-linked (GlcNAc...) (complex) asparagine; atypical glycosylation is present at asparagine 163. The Peptidase S1 domain occupies 388–623 (IVGGTASVRG…YVDWILEKTQ (236 aa)). Residue histidine 431 is the Charge relay system of the active site. Asparagine 450 carries an N-linked (GlcNAc...) (complex) asparagine glycan. Aspartate 480 serves as the catalytic Charge relay system. A glycan (N-linked (GlcNAc...) (complex) asparagine) is linked at asparagine 491. Position 547–550 (547–550 (KRYR)) interacts with heparin. Serine 575 acts as the Charge relay system in catalysis.

Belongs to the peptidase S1 family. Plasma kallikrein subfamily. In terms of assembly, homodimer; disulfide-linked. Can form non-covalently bonded homodimers. After activation the heavy and light chains are also linked by a disulfide bond. Interacts (activated) with F9 (inactive and activated) in calcium-dependent manner. Forms a heterodimer with SERPINA5. Interacts with Anopheles gambiae D7L2. Interacts (activated) with guianensin, an anticoagulant protein from Simulium guianense saliva. N-glycosylated on both chains. N-glycosylated sites mainly consist of nonfucosylated sialylated biantennary (in high abundance) and/or triantennary (in low abundance) complex structures. Glycosylation at Asn-163 uses a rare non-canonical Asn-X-Cys glycosite. In terms of processing, activated by factor XIIa (or XII), which cleaves each polypeptide after Arg-387 into the light chain, which contains the active site, and the heavy chain, which associates with high molecular weight (HMW) kininogen. Activated by F12 (activated); the presence of negatively charged surfaces accelerates activation. Activated by F2 (thrombin); the presence of negatively charged surfaces, such as polyphosphate and dextran sulfate, strongly accelerates activation. Autoactivated; the presence of negatively charged surfaces, such as polyphosphate and dextran sulfate, accelerates autoactivation and autolysis. Isoform 2 is produced by platelets and megakaryocytes but absent from other blood cells.

The protein localises to the secreted. It carries out the reaction Selective cleavage of Arg-|-Ala and Arg-|-Val bonds in factor IX to form factor IXa.. Inhibited by SERPINA5. Factor XI triggers the middle phase of the intrinsic pathway of blood coagulation by activating factor IX. This is Coagulation factor XI (F11) from Homo sapiens (Human).